Consider the following 284-residue polypeptide: Bifunctional protein FolD (284 aa).

NADP(+) is bound by residues 166–168 (GAS) and Ile-232.

The protein belongs to the tetrahydrofolate dehydrogenase/cyclohydrolase family. In terms of assembly, homodimer.

The enzyme catalyses (6R)-5,10-methylene-5,6,7,8-tetrahydrofolate + NADP(+) = (6R)-5,10-methenyltetrahydrofolate + NADPH. It carries out the reaction (6R)-5,10-methenyltetrahydrofolate + H2O = (6R)-10-formyltetrahydrofolate + H(+). It functions in the pathway one-carbon metabolism; tetrahydrofolate interconversion. Its function is as follows. Catalyzes the oxidation of 5,10-methylenetetrahydrofolate to 5,10-methenyltetrahydrofolate and then the hydrolysis of 5,10-methenyltetrahydrofolate to 10-formyltetrahydrofolate. The protein is Bifunctional protein FolD of Tolumonas auensis (strain DSM 9187 / NBRC 110442 / TA 4).